The following is a 549-amino-acid chain: Oxygen-dependent choline dehydrogenase (549 aa).

4–33 (DFVIIGSGSAGSALAYRLSEGGKNSVIVIE) serves as a coordination point for FAD. Catalysis depends on histidine 465, which acts as the Proton acceptor.

It belongs to the GMC oxidoreductase family. The cofactor is FAD.

It carries out the reaction choline + A = betaine aldehyde + AH2. The enzyme catalyses betaine aldehyde + NAD(+) + H2O = glycine betaine + NADH + 2 H(+). It functions in the pathway amine and polyamine biosynthesis; betaine biosynthesis via choline pathway; betaine aldehyde from choline (cytochrome c reductase route): step 1/1. Involved in the biosynthesis of the osmoprotectant glycine betaine. Catalyzes the oxidation of choline to betaine aldehyde and betaine aldehyde to glycine betaine at the same rate. The protein is Oxygen-dependent choline dehydrogenase of Rhizobium johnstonii (strain DSM 114642 / LMG 32736 / 3841) (Rhizobium leguminosarum bv. viciae).